The following is a 304-amino-acid chain: MAATLRELRGRIRSAGSIKKITKAQELIATSRIARAQARLESARPYADQITQMLTTLAADAALDHPLLVEHPQPKRAGVLVVSSDRGLCGAYNANVFRRSEELFSLLRDEGKQPVLYVVGRKALAYYTFRNWYIAQSWTGFSEQPKYENAAEIASTLVDAFMLGAGEGEDLQTNNEQSVDELHIVFTEFKSMLSQSTEARRMAPMVVEYVEETGPRTLYSFEPDATTLFESFLPRYLTTRVYAAMLESAASELASRQRAMKSATDNADDLIKALTLMANRERQAQITQEISEIVGGANALADAR.

The protein belongs to the ATPase gamma chain family. As to quaternary structure, F-type ATPases have 2 components, CF(1) - the catalytic core - and CF(0) - the membrane proton channel. CF(1) has five subunits: alpha(3), beta(3), gamma(1), delta(1), epsilon(1). CF(0) has three main subunits: a, b and c.

The protein resides in the cell membrane. Functionally, produces ATP from ADP in the presence of a proton gradient across the membrane. The gamma chain is believed to be important in regulating ATPase activity and the flow of protons through the CF(0) complex. This Mycobacterium ulcerans (strain Agy99) protein is ATP synthase gamma chain.